Here is a 428-residue protein sequence, read N- to C-terminus: Trigger factor (428 aa).

Residues 163-248 (GDTAVIDFEG…VHEVKAKQLP (86 aa)) enclose the PPIase FKBP-type domain.

It belongs to the FKBP-type PPIase family. Tig subfamily.

The protein localises to the cytoplasm. The catalysed reaction is [protein]-peptidylproline (omega=180) = [protein]-peptidylproline (omega=0). Its function is as follows. Involved in protein export. Acts as a chaperone by maintaining the newly synthesized protein in an open conformation. Functions as a peptidyl-prolyl cis-trans isomerase. In Geobacillus thermodenitrificans (strain NG80-2), this protein is Trigger factor.